A 259-amino-acid chain; its full sequence is Envelope biogenesis factor ElyC (259 aa).

A run of 2 helical transmembrane segments spans residues 12 to 32 and 39 to 59; these read MLLP…LLWF and GKIF…QPVA.

It localises to the cell inner membrane. Functionally, plays a critical role in the metabolism of the essential lipid carrier used for cell wall synthesis. The protein is Envelope biogenesis factor ElyC (elyC) of Escherichia coli O157:H7.